The sequence spans 155 residues: Ribosomal RNA large subunit methyltransferase H (155 aa).

Residues leucine 73, glycine 104, and 123 to 128 (LSALTL) contribute to the S-adenosyl-L-methionine site.

The protein belongs to the RNA methyltransferase RlmH family. As to quaternary structure, homodimer.

It localises to the cytoplasm. The enzyme catalyses pseudouridine(1915) in 23S rRNA + S-adenosyl-L-methionine = N(3)-methylpseudouridine(1915) in 23S rRNA + S-adenosyl-L-homocysteine + H(+). Specifically methylates the pseudouridine at position 1915 (m3Psi1915) in 23S rRNA. This Coxiella burnetii (strain Dugway 5J108-111) protein is Ribosomal RNA large subunit methyltransferase H.